The primary structure comprises 696 residues: uncharacterized protein (696 aa).

The region spanning 293-426 is the GGDEF domain; the sequence is SVLGLVLLGF…GSRQYCFYEE (134 aa). The EAL domain occupies 435-689; that stretch reads RIQLEHALHQ…EITAFLAEGN (255 aa).

This is an uncharacterized protein from Synechocystis sp. (strain ATCC 27184 / PCC 6803 / Kazusa).